The primary structure comprises 426 residues: Dihydroorotase (426 aa).

H58 and H60 together coordinate Zn(2+). Residues 60-62 (HLR) and N92 each bind substrate. The Zn(2+) site is built by D150, H177, and H230. N276 lines the substrate pocket. A Zn(2+)-binding site is contributed by D303. Residue D303 is part of the active site. Residues H307 and 321 to 322 (FG) each bind substrate.

It belongs to the metallo-dependent hydrolases superfamily. DHOase family. Class I DHOase subfamily. The cofactor is Zn(2+).

The catalysed reaction is (S)-dihydroorotate + H2O = N-carbamoyl-L-aspartate + H(+). It functions in the pathway pyrimidine metabolism; UMP biosynthesis via de novo pathway; (S)-dihydroorotate from bicarbonate: step 3/3. Catalyzes the reversible cyclization of carbamoyl aspartate to dihydroorotate. The chain is Dihydroorotase from Listeria monocytogenes serovar 1/2a (strain ATCC BAA-679 / EGD-e).